Reading from the N-terminus, the 654-residue chain is MTQITEKELKKKYLDLLSQNFDTPEKLATEIINLESILELPKGTEHFVSDLHGEYEAFQHVLRNGSGNVRAKINDIFKERLSTKELNDLTALVYYPEDKLKLIKSDFQSCGQLNVWYITTIEHLIELIKYCSSKYTRSKLRKALPKQYVYIIEELLYKSNEYQNKKSYYETLVNQVIELKQADDLIIGLAYSVQRLVVDHLHVVGDIYDRGPQPDKIMDTLINYHSLDIQWGNHDVLWVGAYAGSKVCLANLLRICARYDNLDIIEDAYGINLRPLLTLAEKYYDADNPAFKPKKRPDKHERLTQREESQITKIHQAIAMIQFKLEIPIIKRRPNFEMEERLVLEKVNYDTNEITVYGNTYPLKDTCFQTINRNNPAELLPEEEEVMNKLLLSFQQSEKLRRHMSFLMRKGSLYLPYNGNLLIHGCIPVDENGEMESFEIDGHTYSGQELLDVFEYHVRKSFDEKENTDDLSTDLVWYLWTGKYSSLFGKRAMTTFERYFIADKASHKEEKNPYYHLREDVNMVRKMLSDFGLNPDEGRIINGHTPVKEINGEDPIKADGKMLVIDGGFSKAYQSTTGIAGYTLLYNSFGMQLVAHQQFNAKEKILSEGIDELSIKRVVDKELQRKKIRDTNIGKELQAQIDILKMLMHDRYLD.

The segment at 288-307 (NPAFKPKKRPDKHERLTQRE) is disordered. The span at 298 to 307 (DKHERLTQRE) shows a compositional bias: basic and acidic residues.

The protein belongs to the FBPase class 3 family. Requires Mn(2+) as cofactor.

The catalysed reaction is beta-D-fructose 1,6-bisphosphate + H2O = beta-D-fructose 6-phosphate + phosphate. It functions in the pathway carbohydrate biosynthesis; gluconeogenesis. The sequence is that of Fructose-1,6-bisphosphatase class 3 from Staphylococcus aureus (strain Mu3 / ATCC 700698).